Here is a 395-residue protein sequence, read N- to C-terminus: Chaperone protein DnaJ 2 (395 aa).

A J domain is found at 10 to 75 (DYYADLGVSK…TKRREYDDLK (66 aa)). A CR-type zinc finger spans residues 165-242 (GTTIPVELTG…CRGRGTVRRT (78 aa)). Zn(2+)-binding residues include Cys-178, Cys-181, Cys-194, Cys-197, Cys-216, Cys-219, Cys-230, and Cys-233. CXXCXGXG motif repeat units lie at residues 178–185 (CNTCHGSG), 194–201 (CGQCNGSG), 216–223 (CTNCGGTG), and 230–237 (CVDCRGRG).

Belongs to the DnaJ family. Homodimer. Zn(2+) serves as cofactor.

It localises to the cytoplasm. Its function is as follows. Participates actively in the response to hyperosmotic and heat shock by preventing the aggregation of stress-denatured proteins and by disaggregating proteins, also in an autonomous, DnaK-independent fashion. Unfolded proteins bind initially to DnaJ; upon interaction with the DnaJ-bound protein, DnaK hydrolyzes its bound ATP, resulting in the formation of a stable complex. GrpE releases ADP from DnaK; ATP binding to DnaK triggers the release of the substrate protein, thus completing the reaction cycle. Several rounds of ATP-dependent interactions between DnaJ, DnaK and GrpE are required for fully efficient folding. Also involved, together with DnaK and GrpE, in the DNA replication of plasmids through activation of initiation proteins. The sequence is that of Chaperone protein DnaJ 2 from Corynebacterium efficiens (strain DSM 44549 / YS-314 / AJ 12310 / JCM 11189 / NBRC 100395).